Here is a 316-residue protein sequence, read N- to C-terminus: Acetaldehyde dehydrogenase (316 aa).

11–14 lines the NAD(+) pocket; the sequence is SGNI. Cys-131 serves as the catalytic Acyl-thioester intermediate. NAD(+) contacts are provided by residues 162-170 and Asn-289; that span reads SAGPGTRAN.

Belongs to the acetaldehyde dehydrogenase family. As to quaternary structure, interacts with MhpE.

The catalysed reaction is acetaldehyde + NAD(+) + CoA = acetyl-CoA + NADH + H(+). Its pathway is aromatic compound metabolism; 3-phenylpropanoate degradation. Its function is as follows. Catalyzes the conversion of acetaldehyde to acetyl-CoA, using NAD(+) and coenzyme A. Is the final enzyme in the meta-cleavage pathway for the degradation of aromatic compounds. This chain is Acetaldehyde dehydrogenase, found in Klebsiella pneumoniae subsp. pneumoniae (strain ATCC 700721 / MGH 78578).